The following is a 246-amino-acid chain: tRNA (guanine-N(1)-)-methyltransferase (246 aa).

S-adenosyl-L-methionine-binding positions include Gly-113 and 133–138 (IGDYVL).

The protein belongs to the RNA methyltransferase TrmD family. As to quaternary structure, homodimer.

It localises to the cytoplasm. The catalysed reaction is guanosine(37) in tRNA + S-adenosyl-L-methionine = N(1)-methylguanosine(37) in tRNA + S-adenosyl-L-homocysteine + H(+). In terms of biological role, specifically methylates guanosine-37 in various tRNAs. This chain is tRNA (guanine-N(1)-)-methyltransferase, found in Haemophilus influenzae (strain PittEE).